The chain runs to 197 residues: Small ribosomal subunit protein eS1 (197 aa).

Belongs to the eukaryotic ribosomal protein eS1 family.

This Methanoculleus marisnigri (strain ATCC 35101 / DSM 1498 / JR1) protein is Small ribosomal subunit protein eS1.